Reading from the N-terminus, the 93-residue chain is YcgL domain-containing protein AHA_2135 (93 aa).

One can recognise a YcgL domain in the interval 1–85; it reads MLCAVYKSRK…PPENLLEQHK (85 aa).

The protein is YcgL domain-containing protein AHA_2135 of Aeromonas hydrophila subsp. hydrophila (strain ATCC 7966 / DSM 30187 / BCRC 13018 / CCUG 14551 / JCM 1027 / KCTC 2358 / NCIMB 9240 / NCTC 8049).